The following is a 359-amino-acid chain: Putative nucleotidyltransferase MAB21L1 (359 aa).

A ribonucleoside 5'-triphosphate-binding positions include R23–K24 and F63–L66. Residues E73 and E75 each coordinate Mg(2+). Residues K248 and S252–K255 contribute to the a ribonucleoside 5'-triphosphate site.

Belongs to the mab-21 family. In terms of assembly, monomer. Homodecamer; composed of 2 back to back homopentamers. The protein may exist as monomer in solution and oiligomerizes upon ligand binding.

Its subcellular location is the nucleus. Functionally, putative nucleotidyltransferase required for several aspects of embryonic development including normal development of the eye. It is unclear whether it displays nucleotidyltransferase activity in vivo. Binds single-stranded RNA (ssRNA). This Danio rerio (Zebrafish) protein is Putative nucleotidyltransferase MAB21L1 (mab21l1).